The chain runs to 269 residues: Dynein regulatory complex protein 8 (269 aa).

A disordered region spans residues 1-113 (MLGPGQVRLR…RTGKGLGYNS (113 aa)). The segment covering 54 to 76 (AQGSSSPGIQSGPSSRPGSPRGA) has biased composition (low complexity). EF-hand domains are found at residues 150 to 185 (EFHK…LGCC) and 228 to 263 (IPED…EDGV).

The protein belongs to the DRC8 family. In terms of assembly, component of the nexin-dynein regulatory complex (N-DRC).

It is found in the cytoplasm. It localises to the cytoskeleton. Its subcellular location is the flagellum axoneme. Functionally, component of the nexin-dynein regulatory complex (N-DRC), a key regulator of ciliary/flagellar motility which maintains the alignment and integrity of the distal axoneme and regulates microtubule sliding in motile axonemes. This Homo sapiens (Human) protein is Dynein regulatory complex protein 8 (EFCAB2).